A 191-amino-acid chain; its full sequence is Signal peptidase complex catalytic subunit sec11 (191 aa).

Residues 1-18 (MLSFLSSNLSNVRQSLAQ) lie on the Cytoplasmic side of the membrane. A helical; Signal-anchor for type II membrane protein transmembrane segment spans residues 19 to 39 (VLNFALVLSTAFMMWKGLSVF). The Lumenal portion of the chain corresponds to 40–191 (TASSSPVVVV…MGLMVMLQRE (152 aa)). Residues Ser-53, His-92, and Asp-133 each act as charge relay system in the active site. A C-terminal short (CTS) helix region spans residues 177-188 (ALLGIMGLMVML).

The protein belongs to the peptidase S26B family. Component of the signal peptidase complex (SPC) composed of a catalytic subunit SEC11 and three accessory subunits SPC1, SPC2 and SPC3. The complex induces a local thinning of the ER membrane which is used to measure the length of the signal peptide (SP) h-region of protein substrates. This ensures the selectivity of the complex towards h-regions shorter than 18-20 amino acids. SPC associates with the translocon complex.

It is found in the endoplasmic reticulum membrane. It catalyses the reaction Cleavage of hydrophobic, N-terminal signal or leader sequences from secreted and periplasmic proteins.. Catalytic component of the signal peptidase complex (SPC) which catalyzes the cleavage of N-terminal signal sequences from nascent proteins as they are translocated into the lumen of the endoplasmic reticulum. Specifically cleaves N-terminal signal peptides that contain a hydrophobic alpha-helix (h-region) shorter than 18-20 amino acids. The chain is Signal peptidase complex catalytic subunit sec11 (sec11) from Aspergillus oryzae (strain ATCC 42149 / RIB 40) (Yellow koji mold).